Here is a 394-residue protein sequence, read N- to C-terminus: Probable tRNA sulfurtransferase (394 aa).

Residues 61 to 168 (DETVATLSRI…PMINIYSEEI (108 aa)) form the THUMP domain. Residues 185 to 186 (LL), 210 to 211 (YF), arginine 267, glycine 289, and glutamine 298 contribute to the ATP site.

This sequence belongs to the ThiI family.

The protein localises to the cytoplasm. The catalysed reaction is [ThiI sulfur-carrier protein]-S-sulfanyl-L-cysteine + a uridine in tRNA + 2 reduced [2Fe-2S]-[ferredoxin] + ATP + H(+) = [ThiI sulfur-carrier protein]-L-cysteine + a 4-thiouridine in tRNA + 2 oxidized [2Fe-2S]-[ferredoxin] + AMP + diphosphate. It catalyses the reaction [ThiS sulfur-carrier protein]-C-terminal Gly-Gly-AMP + S-sulfanyl-L-cysteinyl-[cysteine desulfurase] + AH2 = [ThiS sulfur-carrier protein]-C-terminal-Gly-aminoethanethioate + L-cysteinyl-[cysteine desulfurase] + A + AMP + 2 H(+). The protein operates within cofactor biosynthesis; thiamine diphosphate biosynthesis. Functionally, catalyzes the ATP-dependent transfer of a sulfur to tRNA to produce 4-thiouridine in position 8 of tRNAs, which functions as a near-UV photosensor. Also catalyzes the transfer of sulfur to the sulfur carrier protein ThiS, forming ThiS-thiocarboxylate. This is a step in the synthesis of thiazole, in the thiamine biosynthesis pathway. The sulfur is donated as persulfide by IscS. This is Probable tRNA sulfurtransferase from Agathobacter rectalis (strain ATCC 33656 / DSM 3377 / JCM 17463 / KCTC 5835 / VPI 0990) (Eubacterium rectale).